The primary structure comprises 102 residues: NADH-quinone oxidoreductase subunit K (102 aa).

The next 3 membrane-spanning stretches (helical) occupy residues 6–26 (LEHG…GLMV), 30–50 (ILFV…AFVV), and 62–82 (VMFI…LAIL).

It belongs to the complex I subunit 4L family. As to quaternary structure, NDH-1 is composed of 13 different subunits. Subunits NuoA, H, J, K, L, M, N constitute the membrane sector of the complex.

The protein localises to the cell inner membrane. It catalyses the reaction a quinone + NADH + 5 H(+)(in) = a quinol + NAD(+) + 4 H(+)(out). Functionally, NDH-1 shuttles electrons from NADH, via FMN and iron-sulfur (Fe-S) centers, to quinones in the respiratory chain. The immediate electron acceptor for the enzyme in this species is believed to be ubiquinone. Couples the redox reaction to proton translocation (for every two electrons transferred, four hydrogen ions are translocated across the cytoplasmic membrane), and thus conserves the redox energy in a proton gradient. This is NADH-quinone oxidoreductase subunit K from Pseudomonas syringae pv. syringae (strain B728a).